A 150-amino-acid chain; its full sequence is 3-dehydroquinate dehydratase (150 aa).

Catalysis depends on tyrosine 26, which acts as the Proton acceptor. 3 residues coordinate substrate: asparagine 77, histidine 83, and aspartate 90. Histidine 103 serves as the catalytic Proton donor. Substrate contacts are provided by residues 104 to 105 (LS) and arginine 114.

The protein belongs to the type-II 3-dehydroquinase family. As to quaternary structure, homododecamer.

It carries out the reaction 3-dehydroquinate = 3-dehydroshikimate + H2O. It functions in the pathway metabolic intermediate biosynthesis; chorismate biosynthesis; chorismate from D-erythrose 4-phosphate and phosphoenolpyruvate: step 3/7. Catalyzes a trans-dehydration via an enolate intermediate. This Erwinia tasmaniensis (strain DSM 17950 / CFBP 7177 / CIP 109463 / NCPPB 4357 / Et1/99) protein is 3-dehydroquinate dehydratase.